Consider the following 92-residue polypeptide: Small ribosomal subunit protein uS19 (92 aa).

The protein belongs to the universal ribosomal protein uS19 family.

In terms of biological role, protein S19 forms a complex with S13 that binds strongly to the 16S ribosomal RNA. The protein is Small ribosomal subunit protein uS19 of Shewanella putrefaciens (strain CN-32 / ATCC BAA-453).